Consider the following 1879-residue polypeptide: Protein TIC 214 (1879 aa).

The next 6 membrane-spanning stretches (helical) occupy residues 18 to 38, 67 to 87, 90 to 110, 127 to 147, 175 to 195, and 218 to 238; these read IINS…FSIG, FITG…HLAL, PHTI…WNNH, LSIQ…HFIL, VGWL…LVWI, and IFSI…PSPI. The tract at residues 243-291 is disordered; sequence LKETEERGESEEERDVEKTSETKGTKQEQEGSTEEDPSPSLFSEEKEDP. The segment covering 257–271 has biased composition (basic and acidic residues); the sequence is DVEKTSETKGTKQEQ.

Belongs to the TIC214 family. As to quaternary structure, part of the Tic complex.

It is found in the plastid. Its subcellular location is the chloroplast inner membrane. Involved in protein precursor import into chloroplasts. May be part of an intermediate translocation complex acting as a protein-conducting channel at the inner envelope. This is Protein TIC 214 from Morus indica (Mulberry).